Here is a 1476-residue protein sequence, read N- to C-terminus: ABC-type transporter frbG (1476 aa).

Helical transmembrane passes span 26–46 (LLFE…VLAL), 64–84 (LYYA…VQLI), 97–117 (SIAI…LCHL), 122–142 (SAKP…FDII), and 146–166 (TLWI…GLVL). N-linked (GlcNAc...) asparagine glycosylation is present at N244. 4 helical membrane-spanning segments follow: residues 266–286 (FLAG…QPFL), 302–322 (AGAT…GIAI), 380–400 (LQTM…TWLL), and 409–429 (IPSV…AVMA). Positions 274–553 (LALTGFTFAQ…FVHSAVNLML (280 aa)) constitute an ABC transmembrane type-1 1 domain. An N-linked (GlcNAc...) asparagine glycan is attached at N464. 2 consecutive transmembrane segments (helical) span residues 487-507 (CLVF…IIGF) and 533-553 (IFAL…NLML). The 227-residue stretch at 619 to 845 (IQARDTNIGW…VTAHVHNQTS (227 aa)) folds into the ABC transporter 1 domain. ATP is bound at residue 652-659 (GPTNSGKS). N-linked (GlcNAc...) asparagine glycosylation is found at N694, N776, N805, and N842. 5 consecutive transmembrane segments (helical) span residues 898-918 (AVFL…SIWV), 936-956 (YLLV…GGGS), 1017-1037 (LFAF…SPFV), 1121-1141 (LGLV…IVIV), and 1151-1171 (GFLG…GGFI). Residues 898–1179 (AVFLALCMAL…FIGGWTGLET (282 aa)) form the ABC transmembrane type-1 2 domain. The region spanning 1216–1447 (IVFDDVTASY…LSSSSPTSSP (232 aa)) is the ABC transporter 2 domain. The N-linked (GlcNAc...) asparagine glycan is linked to N1235. ATP is bound at residue 1250 to 1257 (GRTGSGKS).

The protein belongs to the ABC transporter superfamily. ABCC family. Conjugate transporter (TC 3.A.1.208) subfamily.

It localises to the cell membrane. In terms of biological role, ABC-type transporter; part of the gene cluster that mediates the biosynthesis of the antifungal antibiotic FR901469, an inhibitor of beta-1,3-glucansynthase, exerting antifungal activity against the pathogenes Candida albicans and Aspergillus fumigatus. FR901469 is a cyclic depsipeptide containing 12 amino acid residues and a fatty acid chain. Probably involved in the secretion of FR901469. The protein is ABC-type transporter frbG of Dothideomycetidae sp. (strain 11243) (Fungal sp. (strain No.11243)).